Consider the following 89-residue polypeptide: MSITAERKKAIVAEYANKVGDTGSPEVQVAVLSERIANLTNHFKFHKKDNHSRRGLLKMVSQRRRLLDYLKGIDQNRYQTLIKKLGLRR.

Belongs to the universal ribosomal protein uS15 family. In terms of assembly, part of the 30S ribosomal subunit. Forms a bridge to the 50S subunit in the 70S ribosome, contacting the 23S rRNA.

One of the primary rRNA binding proteins, it binds directly to 16S rRNA where it helps nucleate assembly of the platform of the 30S subunit by binding and bridging several RNA helices of the 16S rRNA. Its function is as follows. Forms an intersubunit bridge (bridge B4) with the 23S rRNA of the 50S subunit in the ribosome. The chain is Small ribosomal subunit protein uS15 from Bartonella henselae (strain ATCC 49882 / DSM 28221 / CCUG 30454 / Houston 1) (Rochalimaea henselae).